A 342-amino-acid chain; its full sequence is uncharacterized protein (342 aa).

It belongs to the cycloisomerase 2 family.

This is an uncharacterized protein from Staphylococcus aureus (strain bovine RF122 / ET3-1).